Here is a 360-residue protein sequence, read N- to C-terminus: Nucleoporin SEH1 (360 aa).

WD repeat units follow at residues 10-49 (DHKD…EWHC), 55-96 (THSG…SNDK), 111-152 (DSRT…NLSQ), 160-210 (SCKL…RKYA), 217-258 (TVTD…KELT), and 276-315 (NHNS…NWKC). K12 participates in a covalent cross-link: Glycyl lysine isopeptide (Lys-Gly) (interchain with G-Cter in SUMO2). S190 is subject to Phosphoserine. A compositionally biased stretch (low complexity) spans 324-342 (SPVNGSSQQGNSNPSVGSN). Residues 324–360 (SPVNGSSQQGNSNPSVGSNIPSLQNSLNGSSAGRKHS) are disordered. Residues 343 to 354 (IPSLQNSLNGSS) are compositionally biased toward polar residues.

This sequence belongs to the WD repeat SEC13 family. As to quaternary structure, component of the Nup107-160 subcomplex of the nuclear pore complex (NPC). The Nup107-160 subcomplex includes NUP160, NUP133, NUP107, NUP98, NUP85, NUP43, NUP37, SEH1 and SEC13. The SEH1 subunit appears to be only weakly associated with the Nup107-160 subcomplex. Component of the GATOR2 subcomplex, composed of MIOS, SEC13, SEH1L, WDR24 and WDR59. The GATOR2 complex interacts with CASTOR1 and CASTOR2; the interaction is negatively regulated by arginine. The GATOR2 complex interacts with SESN1, SESN2 and SESN3; the interaction is negatively regulated by amino acids. SESN1, SESN2 and SESN3 convey leucine availability via direct interaction with SEH1L and WDR24.

It localises to the chromosome. The protein localises to the centromere. Its subcellular location is the kinetochore. The protein resides in the nucleus. It is found in the nuclear pore complex. It localises to the lysosome membrane. Its activity is regulated as follows. The GATOR2 complex is negatively regulated by the upstream amino acid sensors CASTOR1 and SESN2, which sequester the GATOR2 complex in absence of amino acids. In the presence of abundant amino acids, GATOR2 is released from CASTOR1 and SESN2 and activated. Component of the Nup107-160 subcomplex of the nuclear pore complex (NPC). The Nup107-160 subcomplex is required for the assembly of a functional NPC. The Nup107-160 subcomplex is also required for normal kinetochore microtubule attachment, mitotic progression and chromosome segregation. This subunit plays a role in recruitment of the Nup107-160 subcomplex to the kinetochore. In terms of biological role, as a component of the GATOR2 complex, functions as an activator of the amino acid-sensing branch of the mTORC1 signaling pathway. The GATOR2 complex indirectly activates mTORC1 through the inhibition of the GATOR1 subcomplex. GATOR2 probably acts as an E3 ubiquitin-protein ligase toward GATOR1. In the presence of abundant amino acids, the GATOR2 complex mediates ubiquitination of the NPRL2 core component of the GATOR1 complex, leading to GATOR1 inactivation. In the absence of amino acids, GATOR2 is inhibited, activating the GATOR1 complex. Within the GATOR2 complex, SEC13 and SEH1L are required to stabilize the complex. In Bos taurus (Bovine), this protein is Nucleoporin SEH1 (SEH1L).